The sequence spans 438 residues: Serine--tRNA ligase (438 aa).

245–247 (TSE) contributes to the L-serine binding site. 276 to 278 (RSE) contributes to the ATP binding site. Residue glutamate 299 coordinates L-serine. 363–366 (EISS) contacts ATP. An L-serine-binding site is contributed by serine 398.

It belongs to the class-II aminoacyl-tRNA synthetase family. Type-1 seryl-tRNA synthetase subfamily. In terms of assembly, homodimer. The tRNA molecule binds across the dimer.

The protein localises to the cytoplasm. The enzyme catalyses tRNA(Ser) + L-serine + ATP = L-seryl-tRNA(Ser) + AMP + diphosphate + H(+). The catalysed reaction is tRNA(Sec) + L-serine + ATP = L-seryl-tRNA(Sec) + AMP + diphosphate + H(+). Its pathway is aminoacyl-tRNA biosynthesis; selenocysteinyl-tRNA(Sec) biosynthesis; L-seryl-tRNA(Sec) from L-serine and tRNA(Sec): step 1/1. Functionally, catalyzes the attachment of serine to tRNA(Ser). Is also able to aminoacylate tRNA(Sec) with serine, to form the misacylated tRNA L-seryl-tRNA(Sec), which will be further converted into selenocysteinyl-tRNA(Sec). This Verminephrobacter eiseniae (strain EF01-2) protein is Serine--tRNA ligase.